A 378-amino-acid chain; its full sequence is Protein RecA (378 aa).

65-72 contacts ATP; that stretch reads GPESSGKT. Residues 325–378 are disordered; sequence AYGMDQTGEEDDQADDKSKDKATKPSDKSQAQAKPKKPVATETSLDLDDSKTDK. Residues 339–351 show a composition bias toward basic and acidic residues; it reads DDKSKDKATKPSD.

This sequence belongs to the RecA family.

The protein resides in the cytoplasm. Its function is as follows. Can catalyze the hydrolysis of ATP in the presence of single-stranded DNA, the ATP-dependent uptake of single-stranded DNA by duplex DNA, and the ATP-dependent hybridization of homologous single-stranded DNAs. It interacts with LexA causing its activation and leading to its autocatalytic cleavage. This chain is Protein RecA, found in Lactiplantibacillus pentosus (Lactobacillus pentosus).